Consider the following 142-residue polypeptide: Large ribosomal subunit protein uL11 (142 aa).

The protein belongs to the universal ribosomal protein uL11 family. Part of the ribosomal stalk of the 50S ribosomal subunit. Interacts with L10 and the large rRNA to form the base of the stalk. L10 forms an elongated spine to which L12 dimers bind in a sequential fashion forming a multimeric L10(L12)X complex. Post-translationally, one or more lysine residues are methylated.

In terms of biological role, forms part of the ribosomal stalk which helps the ribosome interact with GTP-bound translation factors. The sequence is that of Large ribosomal subunit protein uL11 from Xanthomonas campestris pv. campestris (strain 8004).